The primary structure comprises 203 residues: uncharacterized protein (203 aa).

The N-terminal stretch at 1-23 is a signal peptide; that stretch reads MKKIYKALISSLLLSTSINVAYA. Positions 24–87 constitute an SH3b domain; that stretch reads ETQYVTENLS…ILNSDLSSTP (64 aa). The helical transmembrane segment at 167 to 189 threads the bilayer; it reads IAIQWFIYGGSVLGVGLLFGLLI.

The protein to E.coli YgiM.

The protein localises to the membrane. This is an uncharacterized protein from Haemophilus influenzae (strain ATCC 51907 / DSM 11121 / KW20 / Rd).